The following is a 257-amino-acid chain: Enolase-phosphatase E1 (257 aa).

Mg(2+) is bound by residues D16 and E18. Substrate contacts are provided by residues 150–151 (SS) and K184. A Mg(2+)-binding site is contributed by D209.

The protein belongs to the HAD-like hydrolase superfamily. MasA/MtnC family. In terms of assembly, monomer. Mg(2+) is required as a cofactor.

The protein resides in the cytoplasm. It is found in the nucleus. The enzyme catalyses 5-methylsulfanyl-2,3-dioxopentyl phosphate + H2O = 1,2-dihydroxy-5-(methylsulfanyl)pent-1-en-3-one + phosphate. Its pathway is amino-acid biosynthesis; L-methionine biosynthesis via salvage pathway; L-methionine from S-methyl-5-thio-alpha-D-ribose 1-phosphate: step 3/6. It functions in the pathway amino-acid biosynthesis; L-methionine biosynthesis via salvage pathway; L-methionine from S-methyl-5-thio-alpha-D-ribose 1-phosphate: step 4/6. Its function is as follows. Bifunctional enzyme that catalyzes the enolization of 2,3-diketo-5-methylthiopentyl-1-phosphate (DK-MTP-1-P) into the intermediate 2-hydroxy-3-keto-5-methylthiopentenyl-1-phosphate (HK-MTPenyl-1-P), which is then dephosphorylated to form the acireductone 1,2-dihydroxy-3-keto-5-methylthiopentene (DHK-MTPene). In Mus musculus (Mouse), this protein is Enolase-phosphatase E1 (Enoph1).